Reading from the N-terminus, the 31-residue chain is Protamine CIII (31 aa).

The segment at 1–31 (MPRRRRASRPVRRRRRPRVSRRRRRGGRRRR) is disordered.

Testis.

The protein resides in the nucleus. The protein localises to the chromosome. Protamines substitute for histones in the chromatin of sperm during the haploid phase of spermatogenesis. They compact sperm DNA into a highly condensed, stable and inactive complex. This is Protamine CIII from Oncorhynchus mykiss (Rainbow trout).